Here is a 104-residue protein sequence, read N- to C-terminus: Inclusion membrane protein F (104 aa).

2 consecutive transmembrane segments (helical) span residues 39–59 and 70–90; these read LVVA…SLVA and LAVL…VLFI.

The protein resides in the secreted. The protein localises to the host vacuole. It localises to the host pathogen-containing vacuole. Its subcellular location is the host pathogen-containing vacuole membrane. Its function is as follows. Inclusion membrane protein probably involved in early modification events of the chlamydial inclusion. This is Inclusion membrane protein F from Chlamydia trachomatis serovar L2 (strain ATCC VR-902B / DSM 19102 / 434/Bu).